Here is a 944-residue protein sequence, read N- to C-terminus: MDEASHLPNGSLKNMEFTPVGFIKSKRNTTQTQVVSPTKVPNANNGDENEGPVKKRQRRSIDDTIDSTRLFSEASQFDDSFPEIKANIPPSPRSGNVDKSRKRNLIDDLKKDVPMSQPLKEQEVREHQMKKERFDRALESKLLGKRHITYANSDISNKELYINEIKSLKHEIKELRKEKNDTLNNYDTLEEETDDLKNRLQALEKELDAKNKIVNSRKVDDHSGCIEEREQMERKLAELERKLKTVKDQVLELENNSDVQSLKLRSKEDELKNLMNELNELKSNAEEKDTQLEFKKNELRKRTNELNELKIKSDEMDLQLKQKQNESKRLKDELNELETKFSENGSQSSAKENELKMLKNKIAELEEEISTKNSQLIAKEGKLASLMAQLTQLESKLNQRDSQLGSREEELKKTNDKLQKDIRIAREETVSKDERIIDLQKKVKQLENDLFVIKKTHSESKTITDNELESKDKLIKILENDLKVAQEKYSKMEKELKEREFNYKISESKLEDEKTTLNEKISNLAAENSQLKNKIEDNSTATHHMKENYEKQLESLRKDIEEYKESAKDSEDKIEELKIRIAENSAKVSEKRSKDIKQKDEQISDLTQNLKLQEDEISSLKSIIDRYKKDFNQLKSEQSNIQHDLNLQILNLENKLIESEDELKSLRDSQKIEIENWKRKYNNLSLENDRLLTEKESASDKEREISILNRKLDEMDKEKWNLQESKEKYKRELQKVITANDRLRREKEELNENSNNIRIMEDKMTRIKKNYLSEITSLQEENRRLEERLILNERRKDNDSTMQLNDIISYYKLKYHSEVRHNNDLKVINDYLNKVLALGTRRLRLDTRKGEHSLNISLPDDDELDRDYYNSHVYTRYHDYEYPLRFNLNRRGPYFERRLSFKTVALLVLACVRMKRIAFYRRSDDNRLRILRDRIESSSGRISW.

Threonine 18 is subject to Phosphothreonine. Residues 23 to 110 are disordered; that stretch reads IKSKRNTTQT…RKRNLIDDLK (88 aa). A compositionally biased stretch (polar residues) spans 28-46; it reads NTTQTQVVSPTKVPNANNG. Residues 54–59 carry the Nuclear localization signal motif; it reads KKRQRR. Serine 60 is modified (phosphoserine; by MPS1). A phosphothreonine; by MPS1 mark is found at threonine 64 and threonine 68. A compositionally biased stretch (polar residues) spans 67–78; it reads STRLFSEASQFD. The residue at position 80 (serine 80) is a Phosphoserine. Residues 96–110 are compositionally biased toward basic and acidic residues; the sequence is NVDKSRKRNLIDDLK. The stretch at 164–791 forms a coiled coil; the sequence is EIKSLKHEIK…NRRLEERLIL (628 aa). Serine 529 is modified (phosphoserine). 2 consecutive short sequence motifs (nuclear localization signal) follow at residues 726 to 731 and 742 to 747; these read KEKYKR and RLRREK. The calmodulin-binding stretch occupies residues 900-927; sequence SFKTVALLVLACVRMKRIAFYRRSDDNR.

It belongs to the SPC110 family. In terms of assembly, homodimer. Component of the SPC110 complex containing at least CMD1, SPC29 and SCP110. Interacts with SPC97 and SPC98.

It is found in the nucleus. The protein localises to the cytoplasm. Its subcellular location is the cytoskeleton. The protein resides in the microtubule organizing center. It localises to the spindle pole body. Component of the spindle pole body (SPB) required for the proper execution of spindle pole body (SPB) duplication. Potential role in cross-linking filaments or anchoring other molecules. It is essential for growth. This chain is Spindle pole body component 110 (SPC110), found in Saccharomyces cerevisiae (strain ATCC 204508 / S288c) (Baker's yeast).